The primary structure comprises 241 residues: UDP-2,3-diacylglucosamine hydrolase (241 aa).

Positions 9, 11, 42, 79, and 114 each coordinate Mn(2+). 79–80 (NR) is a binding site for substrate. The substrate site is built by Asp-122, Ser-160, Asn-164, Lys-167, and His-195. Positions 195 and 197 each coordinate Mn(2+).

Belongs to the LpxH family. Mn(2+) is required as a cofactor.

The protein resides in the cell inner membrane. The catalysed reaction is UDP-2-N,3-O-bis[(3R)-3-hydroxytetradecanoyl]-alpha-D-glucosamine + H2O = 2-N,3-O-bis[(3R)-3-hydroxytetradecanoyl]-alpha-D-glucosaminyl 1-phosphate + UMP + 2 H(+). The protein operates within glycolipid biosynthesis; lipid IV(A) biosynthesis; lipid IV(A) from (3R)-3-hydroxytetradecanoyl-[acyl-carrier-protein] and UDP-N-acetyl-alpha-D-glucosamine: step 4/6. In terms of biological role, hydrolyzes the pyrophosphate bond of UDP-2,3-diacylglucosamine to yield 2,3-diacylglucosamine 1-phosphate (lipid X) and UMP by catalyzing the attack of water at the alpha-P atom. Involved in the biosynthesis of lipid A, a phosphorylated glycolipid that anchors the lipopolysaccharide to the outer membrane of the cell. The sequence is that of UDP-2,3-diacylglucosamine hydrolase from Shewanella frigidimarina (strain NCIMB 400).